The following is a 419-amino-acid chain: Enolase (419 aa).

Gln161 contributes to the (2R)-2-phosphoglycerate binding site. The active-site Proton donor is Glu205. Mg(2+) is bound by residues Asp240, Glu283, and Asp309. (2R)-2-phosphoglycerate contacts are provided by Lys334, Arg363, Ser364, and Lys385. Lys334 serves as the catalytic Proton acceptor.

It belongs to the enolase family. Mg(2+) is required as a cofactor.

Its subcellular location is the cytoplasm. It localises to the secreted. The protein localises to the cell surface. The enzyme catalyses (2R)-2-phosphoglycerate = phosphoenolpyruvate + H2O. Its pathway is carbohydrate degradation; glycolysis; pyruvate from D-glyceraldehyde 3-phosphate: step 4/5. In terms of biological role, catalyzes the reversible conversion of 2-phosphoglycerate (2-PG) into phosphoenolpyruvate (PEP). It is essential for the degradation of carbohydrates via glycolysis. The protein is Enolase of Saccharolobus solfataricus (strain ATCC 35092 / DSM 1617 / JCM 11322 / P2) (Sulfolobus solfataricus).